The sequence spans 168 residues: Probable prefoldin subunit 5 (168 aa).

The protein belongs to the prefoldin subunit alpha family. In terms of assembly, heterohexamer of two PFD-alpha type and four PFD-beta type subunits.

Functionally, binds specifically to cytosolic chaperonin (c-CPN) and transfers target proteins to it. Binds to nascent polypeptide chain and promotes folding in an environment in which there are many competing pathways for nonnative proteins. The sequence is that of Probable prefoldin subunit 5 from Drosophila melanogaster (Fruit fly).